A 150-amino-acid polypeptide reads, in one-letter code: Ribonuclease H (150 aa).

The RNase H type-1 domain maps to 3–144 (GEDIVEIYTD…ADALARQGMA (142 aa)). Positions 12, 50, 72, and 136 each coordinate Mg(2+).

It belongs to the RNase H family. In terms of assembly, monomer. Mg(2+) is required as a cofactor.

Its subcellular location is the cytoplasm. It carries out the reaction Endonucleolytic cleavage to 5'-phosphomonoester.. Its function is as follows. Endonuclease that specifically degrades the RNA of RNA-DNA hybrids. This Parvibaculum lavamentivorans (strain DS-1 / DSM 13023 / NCIMB 13966) protein is Ribonuclease H.